We begin with the raw amino-acid sequence, 429 residues long: Adenylosuccinate synthetase (429 aa).

GTP is bound by residues 13–19 (GDEGKGK) and 41–43 (GHT). The Proton acceptor role is filled by D14. Residues D14 and G41 each contribute to the Mg(2+) site. Residues 14-17 (DEGK), 39-42 (NAGH), T130, R144, Q224, T239, and R303 contribute to the IMP site. The Proton donor role is filled by H42. 299 to 305 (ATTGRAR) is a substrate binding site. GTP contacts are provided by residues R305, 331 to 333 (KLD), and 412 to 414 (STG).

It belongs to the adenylosuccinate synthetase family. As to quaternary structure, homodimer. It depends on Mg(2+) as a cofactor.

It is found in the cytoplasm. It catalyses the reaction IMP + L-aspartate + GTP = N(6)-(1,2-dicarboxyethyl)-AMP + GDP + phosphate + 2 H(+). The protein operates within purine metabolism; AMP biosynthesis via de novo pathway; AMP from IMP: step 1/2. In terms of biological role, plays an important role in the de novo pathway of purine nucleotide biosynthesis. Catalyzes the first committed step in the biosynthesis of AMP from IMP. The protein is Adenylosuccinate synthetase of Psychrobacter arcticus (strain DSM 17307 / VKM B-2377 / 273-4).